Consider the following 411-residue polypeptide: Citrate synthase (411 aa).

Residues histidine 304 and aspartate 363 contribute to the active site.

It belongs to the citrate synthase family.

It catalyses the reaction oxaloacetate + acetyl-CoA + H2O = citrate + CoA + H(+). The protein operates within carbohydrate metabolism; tricarboxylic acid cycle; isocitrate from oxaloacetate: step 1/2. The chain is Citrate synthase (gltA) from Rickettsia canadensis.